A 359-amino-acid polypeptide reads, in one-letter code: Serpentine receptor class epsilon-26 (359 aa).

7 consecutive transmembrane segments (helical) span residues 29–49, 66–86, 127–147, 172–192, 195–215, 256–276, and 282–302; these read CAIS…VFVS, IGVP…ITIL, VAGF…LAIV, FIII…FNIL, YVLN…YYYI, LVFV…ALVL, and FFMH…FLVV.

It belongs to the nematode receptor-like protein sre family.

It localises to the membrane. The protein is Serpentine receptor class epsilon-26 (sre-26) of Caenorhabditis elegans.